A 217-amino-acid polypeptide reads, in one-letter code: Ribonuclease HII (217 aa).

An RNase H type-2 domain is found at 27 to 216; the sequence is RTIAGIDEAG…VREHLGESRC (190 aa). A divalent metal cation contacts are provided by aspartate 33, glutamate 34, and aspartate 125.

The protein belongs to the RNase HII family. Requires Mn(2+) as cofactor. The cofactor is Mg(2+).

The protein resides in the cytoplasm. It carries out the reaction Endonucleolytic cleavage to 5'-phosphomonoester.. Its function is as follows. Endonuclease that specifically degrades the RNA of RNA-DNA hybrids. This Geobacter sulfurreducens (strain ATCC 51573 / DSM 12127 / PCA) protein is Ribonuclease HII.